We begin with the raw amino-acid sequence, 1358 residues long: DNA-directed RNA polymerase subunit beta (1358 aa).

Belongs to the RNA polymerase beta chain family. In terms of assembly, the RNAP catalytic core consists of 2 alpha, 1 beta, 1 beta' and 1 omega subunit. When a sigma factor is associated with the core the holoenzyme is formed, which can initiate transcription.

The catalysed reaction is RNA(n) + a ribonucleoside 5'-triphosphate = RNA(n+1) + diphosphate. DNA-dependent RNA polymerase catalyzes the transcription of DNA into RNA using the four ribonucleoside triphosphates as substrates. This Francisella tularensis subsp. tularensis (strain FSC 198) protein is DNA-directed RNA polymerase subunit beta.